We begin with the raw amino-acid sequence, 274 residues long: Large ribosomal subunit protein uL2 (274 aa).

Positions 223-274 are disordered; it reads GIAMNPVDHPHGGGEGRSKGNHPVTPWGMPTKGYKTRKKKQSDKYIISRRKK. Residues 230–240 show a composition bias toward basic and acidic residues; the sequence is DHPHGGGEGRS. The segment covering 256-274 has biased composition (basic residues); it reads YKTRKKKQSDKYIISRRKK.

Belongs to the universal ribosomal protein uL2 family. In terms of assembly, part of the 50S ribosomal subunit. Forms a bridge to the 30S subunit in the 70S ribosome.

In terms of biological role, one of the primary rRNA binding proteins. Required for association of the 30S and 50S subunits to form the 70S ribosome, for tRNA binding and peptide bond formation. It has been suggested to have peptidyltransferase activity; this is somewhat controversial. Makes several contacts with the 16S rRNA in the 70S ribosome. The protein is Large ribosomal subunit protein uL2 of Nautilia profundicola (strain ATCC BAA-1463 / DSM 18972 / AmH).